The chain runs to 249 residues: 1-(5-phosphoribosyl)-5-[(5-phosphoribosylamino)methylideneamino] imidazole-4-carboxamide isomerase (249 aa).

The active-site Proton acceptor is the D8. Residue D129 is the Proton donor of the active site.

It belongs to the HisA/HisF family.

The protein resides in the cytoplasm. The catalysed reaction is 1-(5-phospho-beta-D-ribosyl)-5-[(5-phospho-beta-D-ribosylamino)methylideneamino]imidazole-4-carboxamide = 5-[(5-phospho-1-deoxy-D-ribulos-1-ylimino)methylamino]-1-(5-phospho-beta-D-ribosyl)imidazole-4-carboxamide. Its pathway is amino-acid biosynthesis; L-histidine biosynthesis; L-histidine from 5-phospho-alpha-D-ribose 1-diphosphate: step 4/9. The chain is 1-(5-phosphoribosyl)-5-[(5-phosphoribosylamino)methylideneamino] imidazole-4-carboxamide isomerase from Magnetococcus marinus (strain ATCC BAA-1437 / JCM 17883 / MC-1).